Here is a 394-residue protein sequence, read N- to C-terminus: Cell division protein FtsZ (394 aa).

GTP contacts are provided by residues 21 to 25 (GGGNN), 108 to 110 (GTG), Glu-139, Arg-143, and Asp-187. The segment at 317–394 (DKPSSQGRKA…EERRSRRTRR (78 aa)) is disordered. Composition is skewed to low complexity over residues 328-346 (STGF…SGAS) and 353-364 (SAHTSHSQSSES). A compositionally biased stretch (basic and acidic residues) spans 365–388 (VNERSHTTKDDDIPSFIRNREERR).

It belongs to the FtsZ family. In terms of assembly, homodimer. Polymerizes to form a dynamic ring structure in a strictly GTP-dependent manner. Interacts directly with several other division proteins.

It is found in the cytoplasm. Its function is as follows. Essential cell division protein that forms a contractile ring structure (Z ring) at the future cell division site. The regulation of the ring assembly controls the timing and the location of cell division. One of the functions of the FtsZ ring is to recruit other cell division proteins to the septum to produce a new cell wall between the dividing cells. Binds GTP and shows GTPase activity. The polypeptide is Cell division protein FtsZ (Staphylococcus epidermidis (strain ATCC 12228 / FDA PCI 1200)).